The following is a 167-amino-acid chain: Lipoprotein signal peptidase (167 aa).

4 helical membrane passes run 8 to 28 (TFLT…VVLL), 46 to 66 (WGHF…FGLF), 68 to 88 (QYKI…ALFL), and 101 to 121 (IALT…LLHG). Active-site residues include Asp125 and Asp143. The helical transmembrane segment at 139 to 159 (FNLADAFISIGTLLLIGHLYF) threads the bilayer.

Belongs to the peptidase A8 family.

It is found in the cell inner membrane. The enzyme catalyses Release of signal peptides from bacterial membrane prolipoproteins. Hydrolyzes -Xaa-Yaa-Zaa-|-(S,diacylglyceryl)Cys-, in which Xaa is hydrophobic (preferably Leu), and Yaa (Ala or Ser) and Zaa (Gly or Ala) have small, neutral side chains.. The protein operates within protein modification; lipoprotein biosynthesis (signal peptide cleavage). Its function is as follows. This protein specifically catalyzes the removal of signal peptides from prolipoproteins. The protein is Lipoprotein signal peptidase of Chlamydia trachomatis serovar L2 (strain ATCC VR-902B / DSM 19102 / 434/Bu).